A 437-amino-acid chain; its full sequence is Adenylosuccinate synthetase (437 aa).

Residues 25-31 (GDEGKGK), 53-55 (GHT), and lysine 62 contribute to the GTP site. Aspartate 26 serves as the catalytic Proton acceptor. Mg(2+) is bound by residues aspartate 26 and glycine 53. IMP-binding positions include 26-29 (DEGK) and 51-54 (NAGH). Residue histidine 54 is the Proton donor of the active site. Residues threonine 141, arginine 155, asparagine 232, and threonine 247 each coordinate IMP. GTP is bound at residue threonine 307. Substrate is bound at residue 307 to 313 (TTTKRPR). Arginine 311 serves as a coordination point for IMP. GTP-binding positions include arginine 313, 339-341 (KLD), and 425-427 (GIG).

It belongs to the adenylosuccinate synthetase family. As to quaternary structure, homodimer. Mg(2+) serves as cofactor.

The protein localises to the cytoplasm. It carries out the reaction IMP + L-aspartate + GTP = N(6)-(1,2-dicarboxyethyl)-AMP + GDP + phosphate + 2 H(+). The protein operates within purine metabolism; AMP biosynthesis via de novo pathway; AMP from IMP: step 1/2. Plays an important role in the salvage pathway for purine nucleotide biosynthesis. Catalyzes the first committed step in the biosynthesis of AMP from IMP. The chain is Adenylosuccinate synthetase from Plasmodium vivax (strain Salvador I).